Reading from the N-terminus, the 61-residue chain is Sperm protamine P1 (61 aa).

Residues 1 to 61 (MARFRRSRSR…RSSRRSRRRN (61 aa)) form a disordered region.

The protein belongs to the protamine P1 family. In terms of tissue distribution, testis.

It localises to the nucleus. The protein localises to the chromosome. Functionally, protamines substitute for histones in the chromatin of sperm during the haploid phase of spermatogenesis. They compact sperm DNA into a highly condensed, stable and inactive complex. The protein is Sperm protamine P1 (PRM1) of Ornithorhynchus anatinus (Duckbill platypus).